Reading from the N-terminus, the 506-residue chain is ATP synthase subunit alpha (506 aa).

ATP is bound at residue 170 to 177; sequence GDRQTGKT.

It belongs to the ATPase alpha/beta chains family. In terms of assembly, F-type ATPases have 2 components, CF(1) - the catalytic core - and CF(0) - the membrane proton channel. CF(1) has five subunits: alpha(3), beta(3), gamma(1), delta(1), epsilon(1). CF(0) has four main subunits: a(1), b(1), b'(1) and c(9-12).

The protein localises to the cellular thylakoid membrane. The catalysed reaction is ATP + H2O + 4 H(+)(in) = ADP + phosphate + 5 H(+)(out). Produces ATP from ADP in the presence of a proton gradient across the membrane. The alpha chain is a regulatory subunit. The sequence is that of ATP synthase subunit alpha from Synechococcus sp. (strain JA-3-3Ab) (Cyanobacteria bacterium Yellowstone A-Prime).